A 498-amino-acid chain; its full sequence is Lysine--tRNA ligase (498 aa).

The Mg(2+) site is built by Glu409 and Glu416.

The protein belongs to the class-II aminoacyl-tRNA synthetase family. As to quaternary structure, homodimer. Mg(2+) is required as a cofactor.

It localises to the cytoplasm. The enzyme catalyses tRNA(Lys) + L-lysine + ATP = L-lysyl-tRNA(Lys) + AMP + diphosphate. This is Lysine--tRNA ligase from Teredinibacter turnerae (strain ATCC 39867 / T7901).